Here is a 161-residue protein sequence, read N- to C-terminus: Allophycocyanin alpha chain 1 (161 aa).

N71 is modified (N4-methylasparagine). C81 provides a ligand contact to (2R,3E)-phycocyanobilin.

This sequence belongs to the phycobiliprotein family. Component of the phycobilisome. Heterodimer of an alpha and a beta chain. Contains one covalently linked bilin chromophore.

Its subcellular location is the cellular thylakoid membrane. Functionally, light-harvesting photosynthetic bile pigment-protein from the phycobiliprotein complex. Allophycocyanin has a maximum absorption at approximately 650 nanometers. The sequence is that of Allophycocyanin alpha chain 1 from Microchaete diplosiphon (Fremyella diplosiphon).